Here is a 136-residue protein sequence, read N- to C-terminus: NADPH-dependent 7-cyano-7-deazaguanine reductase (136 aa).

Catalysis depends on Cys50, which acts as the Thioimide intermediate. The active-site Proton donor is the Asp57. Residues 72–74 (YEL) and 91–92 (HE) each bind substrate.

This sequence belongs to the GTP cyclohydrolase I family. QueF type 1 subfamily.

It is found in the cytoplasm. It catalyses the reaction 7-aminomethyl-7-carbaguanine + 2 NADP(+) = 7-cyano-7-deazaguanine + 2 NADPH + 3 H(+). Its pathway is tRNA modification; tRNA-queuosine biosynthesis. Catalyzes the NADPH-dependent reduction of 7-cyano-7-deazaguanine (preQ0) to 7-aminomethyl-7-deazaguanine (preQ1). The polypeptide is NADPH-dependent 7-cyano-7-deazaguanine reductase (Prochlorococcus marinus (strain MIT 9312)).